We begin with the raw amino-acid sequence, 81 residues long: uncharacterized protein (81 aa).

The segment at 55–81 is disordered; the sequence is LDKRNSNNKIEKSENTGENHDNNQDQK.

This is an uncharacterized protein from Thermoproteus tenax virus 1 (strain KRA1) (TTV1).